The chain runs to 702 residues: Sodium/hydrogen exchanger 6 (702 aa).

12 helical membrane-spanning segments follow: residues 72–92, 104–124, 177–197, 212–232, 253–273, 279–299, 325–345, 373–393, 415–435, 437–457, 480–500, and 516–536; these read SANL…IWLF, GLAM…IHVP, VTFD…FYAG, ILAY…SIMY, CLLF…AIFH, VELY…AIVL, IGIF…TGVV, TFLL…FCGI, FELL…LTLF, FQNH…IFLG, NFQH…ALAI, and LLIV…MLSC.

The protein belongs to the monovalent cation:proton antiporter 1 (CPA1) transporter (TC 2.A.36) family. Homodimer. Interacts with RACK1; regulates the distribution of SLC9A6 between endosomes and the plasma membrane. In terms of processing, ubiquitinated (in vitro). Post-translationally, glycosylated.

It localises to the endosome membrane. It is found in the recycling endosome membrane. The protein resides in the early endosome membrane. Its subcellular location is the late endosome membrane. The protein localises to the cell membrane. The catalysed reaction is Na(+)(in) + H(+)(out) = Na(+)(out) + H(+)(in). It carries out the reaction K(+)(in) + H(+)(out) = K(+)(out) + H(+)(in). Endosomal Na(+), K(+)/H(+) antiporter. Mediates the electroneutral exchange of endosomal luminal H(+) for a cytosolic Na(+) or K(+). By facilitating proton efflux, SLC9A6 counteracts the acidity generated by vacuolar (V)-ATPase, thereby limiting luminal acidification. Responsible for alkalizing and maintaining the endosomal pH, and consequently in, e.g., endosome maturation and trafficking of recycling endosomal cargo. Plays a critical role during neurodevelopment by regulating synaptic development and plasticity. Implicated in the maintenance of cell polarity in a manner that is dependent on its ability to modulate intravesicular pH. Regulates intracelular pH in some specialized cells, osteoclasts and stereocilia where this transporter localizes to the plasma membrane. The chain is Sodium/hydrogen exchanger 6 (Slc9a6) from Mus musculus (Mouse).